The following is a 921-amino-acid chain: Translation initiation factor IF-2 (921 aa).

Disordered stretches follow at residues 81 to 118 (AVAESLEEKPAEPVAPAAPTPPEVPAAAPAPPKAAAAP), 175 to 194 (PVVEKPKVPAQPDKPSANQA), and 219 to 301 (VAPA…KKHE). A compositionally biased stretch (pro residues) spans 96–112 (PAAPTPPEVPAAAPAPP). Positions 229–241 (RPSPAAGAPSRGA) are enriched in low complexity. Positions 292–301 (KKKEQPKKHE) are enriched in basic and acidic residues. The 170-residue stretch at 421-590 (KRPPVVTIMG…LLQADLMELK (170 aa)) folds into the tr-type G domain. The tract at residues 430–437 (GHVDHGKT) is G1. Position 430–437 (430–437 (GHVDHGKT)) interacts with GTP. Positions 455–459 (GITQH) are G2. The segment at 476–479 (DTPG) is G3. Residues 476-480 (DTPGH) and 530-533 (NKID) each bind GTP. The tract at residues 530-533 (NKID) is G4. Positions 566-568 (SAK) are G5.

It belongs to the TRAFAC class translation factor GTPase superfamily. Classic translation factor GTPase family. IF-2 subfamily.

It is found in the cytoplasm. In terms of biological role, one of the essential components for the initiation of protein synthesis. Protects formylmethionyl-tRNA from spontaneous hydrolysis and promotes its binding to the 30S ribosomal subunits. Also involved in the hydrolysis of GTP during the formation of the 70S ribosomal complex. The protein is Translation initiation factor IF-2 of Pelobacter propionicus (strain DSM 2379 / NBRC 103807 / OttBd1).